Consider the following 250-residue polypeptide: Recombination protein RecR (250 aa).

The segment at 56–71 (CRICHNISQEDVCRIC) adopts a C4-type zinc-finger fold. The 149-residue stretch at 79–227 (SIICVVEESK…TVTRLASGIP (149 aa)) folds into the Toprim domain. Positions 148–172 (LGDADTPADGESSGADAAETGNAKT) are disordered.

The protein belongs to the RecR family.

Its function is as follows. May play a role in DNA repair. It seems to be involved in an RecBC-independent recombinational process of DNA repair. It may act with RecF and RecO. The sequence is that of Recombination protein RecR from Corynebacterium jeikeium (strain K411).